Consider the following 699-residue polypeptide: Polyribonucleotide nucleotidyltransferase (699 aa).

Residues Asp-485 and Asp-491 each coordinate Mg(2+). The KH domain maps to 552–611 (PRITTIKINPEKIRDVIGKGGAVIRALTEETGTTIELEDDGTVKIASSNGDATREAIRRI). The S1 motif domain occupies 621–689 (GRIYNGKVIR…RQGRVRLSIK (69 aa)).

The protein belongs to the polyribonucleotide nucleotidyltransferase family. Component of the RNA degradosome, which is a multiprotein complex involved in RNA processing and mRNA degradation. It depends on Mg(2+) as a cofactor.

The protein localises to the cytoplasm. It catalyses the reaction RNA(n+1) + phosphate = RNA(n) + a ribonucleoside 5'-diphosphate. Functionally, involved in mRNA degradation. Catalyzes the phosphorolysis of single-stranded polyribonucleotides processively in the 3'- to 5'-direction. This is Polyribonucleotide nucleotidyltransferase from Shewanella sp. (strain ANA-3).